A 329-amino-acid chain; its full sequence is GTPase Obg (329 aa).

The 159-residue stretch at 1-159 folds into the Obg domain; sequence MQFIDQACIS…WLLHLELKLL (159 aa). The OBG-type G domain maps to 160–328; sequence AEVGIIGLPN…LLKNVWEKLE (169 aa). ATP contacts are provided by residues 166–173, 191–195, 213–216, 280–283, and 309–311; these read GLPNAGKS, FTTLI, DIPG, NKKE, and SAA. The Mg(2+) site is built by Ser-173 and Thr-193.

Belongs to the TRAFAC class OBG-HflX-like GTPase superfamily. OBG GTPase family. Monomer. Requires Mg(2+) as cofactor.

The protein resides in the cytoplasm. An essential GTPase which binds GTP, GDP and possibly (p)ppGpp with moderate affinity, with high nucleotide exchange rates and a fairly low GTP hydrolysis rate. Plays a role in control of the cell cycle, stress response, ribosome biogenesis and in those bacteria that undergo differentiation, in morphogenesis control. This Prochlorococcus marinus (strain MIT 9211) protein is GTPase Obg.